Reading from the N-terminus, the 80-residue chain is Serine palmitoyltransferase-regulating protein TSC3 (80 aa).

Residues 54–74 (FDSFFLHVFFLTIFSLSFFGI) form a helical membrane-spanning segment.

As to quaternary structure, interacts with the serine palmitoyltransferase complex LCB1-LCB2. Component of the SPOTS complex, at least composed of LCB1/2 (LCB1 and/or LCB2), ORM1/2 (ORM1 and/or ORM2), SAC1 and TSC3.

It is found in the endoplasmic reticulum membrane. In terms of biological role, stimulates the activity of serine palmitoyltransferase (SPT), and thus plays a role in the biosynthesis of sphingolipids. The polypeptide is Serine palmitoyltransferase-regulating protein TSC3 (TSC3) (Saccharomyces cerevisiae (strain ATCC 204508 / S288c) (Baker's yeast)).